A 163-amino-acid chain; its full sequence is F-box protein At2g35280 (163 aa).

Residues 8-57 (ISRLEALPQDLLREIVAKIGVKSAEDYHNCILSCKELGASANDERVLKTL) form the F-box domain.

The protein is F-box protein At2g35280 of Arabidopsis thaliana (Mouse-ear cress).